Reading from the N-terminus, the 849-residue chain is Autoinducer 1 sensor kinase/phosphatase LuxN (849 aa).

Transmembrane regions (helical) follow at residues 9 to 29 (IVYAKAITLLATVAVVMMWLF), 41 to 61 (VIFGTHHAAYIAYSVCIIAWI), 160 to 180 (SYFFIGLVSFVVLTLVNLVAM), 196 to 216 (IAGILVFMLSTAVIHLGMTYF), 220 to 242 (FSLTWLPPALSISEMLFVGYALL), 251 to 275 (YIAYLALSVLLVCAIFVLPLGAIFI), and 283 to 301 (WLIAIPICALIGITWQLLY). The Histidine kinase domain occupies 468–683 (SIAHEMRNPL…EFHLYFPVVP (216 aa)). His471 is subject to Phosphohistidine; by autocatalysis. The 114-residue stretch at 722-835 (TVLIVDDKEV…ALRHVLGNWL (114 aa)) folds into the Response regulatory domain. The residue at position 771 (Asp771) is a 4-aspartylphosphate.

It localises to the cell inner membrane. It catalyses the reaction ATP + protein L-histidine = ADP + protein N-phospho-L-histidine.. Its activity is regulated as follows. The phosphatase activity is constitutive and the kinase activity is regulated by the presence or absence of AI-1. At low cell density the kinase activity overrides the phosphatase activity. At low cell density, in the absence of AI-1 (autoinducer 1), LuxN has a kinase activity and autophosphorylates on His-471. The phosphoryl group is then transferred on Asp-771 of the response regulator domain. The phosphoryl group is transferred to LuxU, and ultimately to LuxO. At high cell density, in the presence of AI-1, the kinase activity is inactivated, and the response regulator domain has a phosphatase activity. LuxN phosphatase acts on itself. As LuxU could function to establish an equilibrium between the aspartyl-phosphate of LuxN and the aspartyl-phosphate of LuxO, LuxU transfers phosphate from LuxO to LuxN and finally phosphate is drained from the system. The protein is Autoinducer 1 sensor kinase/phosphatase LuxN (luxN) of Vibrio campbellii (strain ATCC BAA-1116).